Reading from the N-terminus, the 325-residue chain is All-trans-nonaprenyl-diphosphate synthase (geranyl-diphosphate specific) (325 aa).

Isopentenyl diphosphate contacts are provided by Lys48, Arg51, and His81. Positions 88 and 92 each coordinate Mg(2+). Residue Arg97 participates in an all-trans-polyprenyl diphosphate binding. Residue Arg98 coordinates isopentenyl diphosphate. An all-trans-polyprenyl diphosphate is bound by residues Lys174, Thr175, Gln211, and Lys228.

It belongs to the FPP/GGPP synthase family. In terms of assembly, homodimer. It depends on Mg(2+) as a cofactor.

It catalyses the reaction 7 isopentenyl diphosphate + (2E)-geranyl diphosphate = all-trans-nonaprenyl diphosphate + 7 diphosphate. In terms of biological role, catalyzes the sequential condensation of isopentenyl diphosphate (IPP) with the allylic substrate to give solanesyl diphosphate. Could be important to determine the side chain length of ubiquinone. The protein is All-trans-nonaprenyl-diphosphate synthase (geranyl-diphosphate specific) (sdsA) of Rhodobacter capsulatus (Rhodopseudomonas capsulata).